The primary structure comprises 269 residues: 3-deoxy-manno-octulosonate cytidylyltransferase (269 aa).

It belongs to the KdsB family.

The protein localises to the cytoplasm. It catalyses the reaction 3-deoxy-alpha-D-manno-oct-2-ulosonate + CTP = CMP-3-deoxy-beta-D-manno-octulosonate + diphosphate. Its pathway is nucleotide-sugar biosynthesis; CMP-3-deoxy-D-manno-octulosonate biosynthesis; CMP-3-deoxy-D-manno-octulosonate from 3-deoxy-D-manno-octulosonate and CTP: step 1/1. It functions in the pathway bacterial outer membrane biogenesis; lipopolysaccharide biosynthesis. Functionally, activates KDO (a required 8-carbon sugar) for incorporation into bacterial lipopolysaccharide in Gram-negative bacteria. The polypeptide is 3-deoxy-manno-octulosonate cytidylyltransferase (Cupriavidus taiwanensis (strain DSM 17343 / BCRC 17206 / CCUG 44338 / CIP 107171 / LMG 19424 / R1) (Ralstonia taiwanensis (strain LMG 19424))).